A 132-amino-acid chain; its full sequence is Large ribosomal subunit protein uL22c (132 aa).

This sequence belongs to the universal ribosomal protein uL22 family. Part of the 50S ribosomal subunit.

The protein resides in the plastid. It is found in the chloroplast. In terms of biological role, this protein binds specifically to 23S rRNA. Functionally, the globular domain of the protein is located near the polypeptide exit tunnel on the outside of the subunit, while an extended beta-hairpin is found that lines the wall of the exit tunnel in the center of the 70S ribosome. This is Large ribosomal subunit protein uL22c (rpl22) from Staurastrum punctulatum (Green alga).